We begin with the raw amino-acid sequence, 284 residues long: Bifunctional protein FolD (284 aa).

Residues 165-167 (GRS) and Ser-190 each bind NADP(+).

This sequence belongs to the tetrahydrofolate dehydrogenase/cyclohydrolase family. Homodimer.

It catalyses the reaction (6R)-5,10-methylene-5,6,7,8-tetrahydrofolate + NADP(+) = (6R)-5,10-methenyltetrahydrofolate + NADPH. It carries out the reaction (6R)-5,10-methenyltetrahydrofolate + H2O = (6R)-10-formyltetrahydrofolate + H(+). Its pathway is one-carbon metabolism; tetrahydrofolate interconversion. In terms of biological role, catalyzes the oxidation of 5,10-methylenetetrahydrofolate to 5,10-methenyltetrahydrofolate and then the hydrolysis of 5,10-methenyltetrahydrofolate to 10-formyltetrahydrofolate. This is Bifunctional protein FolD from Streptococcus uberis (strain ATCC BAA-854 / 0140J).